Here is a 134-residue protein sequence, read N- to C-terminus: Phosphoribosyl-AMP cyclohydrolase (134 aa).

Aspartate 77 provides a ligand contact to Mg(2+). Cysteine 78 provides a ligand contact to Zn(2+). Mg(2+) contacts are provided by aspartate 79 and aspartate 81. 2 residues coordinate Zn(2+): cysteine 95 and cysteine 102.

This sequence belongs to the PRA-CH family. In terms of assembly, homodimer. Mg(2+) serves as cofactor. Zn(2+) is required as a cofactor.

Its subcellular location is the cytoplasm. The enzyme catalyses 1-(5-phospho-beta-D-ribosyl)-5'-AMP + H2O = 1-(5-phospho-beta-D-ribosyl)-5-[(5-phospho-beta-D-ribosylamino)methylideneamino]imidazole-4-carboxamide. It participates in amino-acid biosynthesis; L-histidine biosynthesis; L-histidine from 5-phospho-alpha-D-ribose 1-diphosphate: step 3/9. In terms of biological role, catalyzes the hydrolysis of the adenine ring of phosphoribosyl-AMP. The chain is Phosphoribosyl-AMP cyclohydrolase from Pseudomonas aeruginosa (strain UCBPP-PA14).